The chain runs to 154 residues: Probable chemoreceptor glutamine deamidase CheD (154 aa).

Belongs to the CheD family.

The catalysed reaction is L-glutaminyl-[protein] + H2O = L-glutamyl-[protein] + NH4(+). Its function is as follows. Probably deamidates glutamine residues to glutamate on methyl-accepting chemotaxis receptors (MCPs), playing an important role in chemotaxis. This is Probable chemoreceptor glutamine deamidase CheD from Methanococcus maripaludis (strain DSM 14266 / JCM 13030 / NBRC 101832 / S2 / LL).